Consider the following 127-residue polypeptide: Apolipoprotein C-IV (127 aa).

An N-terminal signal peptide occupies residues 1-27 (MSLLRNRLQDLPALCLCVLVLACIGAC).

It belongs to the apolipoprotein C4 family.

It is found in the secreted. Its function is as follows. May participate in lipoprotein metabolism. The polypeptide is Apolipoprotein C-IV (APOC4) (Papio anubis (Olive baboon)).